A 63-amino-acid polypeptide reads, in one-letter code: Large ribosomal subunit protein uL30 (63 aa).

This sequence belongs to the universal ribosomal protein uL30 family. As to quaternary structure, part of the 50S ribosomal subunit.

This chain is Large ribosomal subunit protein uL30, found in Granulibacter bethesdensis (strain ATCC BAA-1260 / CGDNIH1).